Here is a 602-residue protein sequence, read N- to C-terminus: Bifunctional lycopene cyclase/phytoene synthase (602 aa).

The segment at 1–241 (MYDYAFVHLK…IVGGMAAFDQ (241 aa)) is lycopene beta-cyclase. 7 helical membrane passes run 6-26 (FVHL…AYPI), 30-50 (IHLI…LPWD), 76-96 (FEEL…YILF), 118-138 (VVKV…WNAA), 146-166 (YLGL…TLAG), 168-188 (FILS…TFYL), and 230-250 (MLIV…YAFP). Residues 248 to 602 (AFPTLFPKVN…STLLRALYEQ (355 aa)) form a phytoene synthase region.

In the N-terminal section; belongs to the lycopene beta-cyclase family. This sequence in the C-terminal section; belongs to the phytoene/squalene synthase family.

It is found in the membrane. It catalyses the reaction all-trans-lycopene = gamma-carotene. It carries out the reaction gamma-carotene = all-trans-beta-carotene. The enzyme catalyses 2 (2E,6E,10E)-geranylgeranyl diphosphate = 15-cis-phytoene + 2 diphosphate. It functions in the pathway carotenoid biosynthesis; beta-carotene biosynthesis. The protein operates within carotenoid biosynthesis; phytoene biosynthesis; all-trans-phytoene from geranylgeranyl diphosphate: step 1/1. Bifunctional enzyme that catalyzes the reactions from geranylgeranyl diphosphate to phytoene (phytoene synthase) and from lycopene to beta-carotene via the intermediate gamma-carotene and from 3,4-didehydrolycopene to torulene (lycopene cyclase). Torulene is further processed to the acidic carotenoid neurosporaxanthin. The cyclase preferentially catalyzes single cyclizations at only one end of the substrate to produce monocyclic carotenoids. Neurosporaxanthin is synthesized from geranyl-geranyl pyrophosphate (GGPP) through several enzymatic activities. Phytoene synthase activity performed by the bifunctional enzyme al-2 first produces phytoene from geranyl-geranyl pyrophosphate (GGPP). The phytoene dehydrogenase al-1 then introduces 5 desaturations to lead to 3,4-didehydrolycopene via the intermediates phytofluene, zeta-carotene, neurosporene and lycopene. Al-2 cyclase activity then converts 3,4-didehydrolycopene into torulene. Al-2 can also convet lycopene into gamma-carotene which in turn is converted to beta-carotene by an additional al-2 cyclization reaction. Torulene is the substrate of the dioxidase cao-2 that breaks the molecule, removing five carbon atoms to yield beta-apo-4'-carotenal, whereas the aldehyde dehydrogenase ylo-1 mediates the last step by converting beta-apo-4'-carotenal into neurosporaxanthin. In Neurospora crassa (strain ATCC 24698 / 74-OR23-1A / CBS 708.71 / DSM 1257 / FGSC 987), this protein is Bifunctional lycopene cyclase/phytoene synthase.